The chain runs to 141 residues: Large ribosomal subunit protein uL11 (141 aa).

Belongs to the universal ribosomal protein uL11 family. As to quaternary structure, part of the ribosomal stalk of the 50S ribosomal subunit. Interacts with L10 and the large rRNA to form the base of the stalk. L10 forms an elongated spine to which L12 dimers bind in a sequential fashion forming a multimeric L10(L12)X complex. One or more lysine residues are methylated.

Forms part of the ribosomal stalk which helps the ribosome interact with GTP-bound translation factors. The protein is Large ribosomal subunit protein uL11 of Streptococcus agalactiae serotype III (strain NEM316).